A 581-amino-acid polypeptide reads, in one-letter code: Protein LYRIC (581 aa).

Topologically, residues 1 to 49 (MAARSWQDELAQQAEEGSARLRELLSVGLGFLRTELGLDLGLEPKRYPS) are lumenal. An activation of NF-kappa-B region spans residues 1–71 (MAARSWQDEL…LLLFLLGYGW (71 aa)). Residues 50-70 (WVILVGTGALGLLLLFLLGYG) traverse the membrane as a helical segment. At 71–581 (WAAACAGARK…KKKKKARRET (511 aa)) the chain is on the cytoplasmic side. The interval 72–168 (AAACAGARKK…EKSKKNKKKS (97 aa)) is interaction with BCCIP. The disordered stretch occupies residues 77–221 (GARKKRRSPP…DSGSLDSTIP (145 aa)). Residues 100–204 (EDPAQLKNLR…ISHREKRQQR (105 aa)) form an interaction with RELA region. The segment covering 108–126 (LRSEEQKKKNRKKLPEKPK) has biased composition (basic and acidic residues). Phosphothreonine is present on threonine 142. Residues 159 to 168 (EKSKKNKKKS) show a composition bias toward basic residues. At serine 179 the chain carries Phosphoserine. Residues 197 to 207 (HREKRQQRKRD) show a composition bias toward basic residues. Phosphoserine occurs at positions 215 and 250. Lysine 263 carries the post-translational modification N6-acetyllysine. A disordered region spans residues 280–581 (VNGGGWSEKS…KKKKKARRET (302 aa)). A phosphoserine mark is found at serine 297, serine 305, and serine 310. Positions 318 to 331 (QSAWTQDPGDTNAN) are enriched in polar residues. Serine 343 and serine 368 each carry phosphoserine. 2 stretches are compositionally biased toward polar residues: residues 353 to 371 (EPVS…SRNQ) and 382 to 393 (NGLSSADPSSDW). The segment at 380–442 (GLNGLSSADP…EGALPTGKSK (63 aa)) is lung-homing for mammary tumors. A phosphoserine mark is found at serine 414 and serine 425. The span at 421 to 433 (DQKDSDDDKEKGE) shows a compositional bias: basic and acidic residues. Basic residues predominate over residues 440-450 (KSKKKKKKKKK). A phosphoserine mark is found at serine 456, serine 477, serine 493, and serine 495. 2 stretches are compositionally biased toward polar residues: residues 519–535 (PSVT…SSQV) and 548–567 (NAKQ…NWES). Serine 567 is subject to Phosphoserine. A compositionally biased stretch (basic residues) spans 570-581 (QIKKKKKARRET).

As to quaternary structure, interacts with BCCIP, CREBBP/CBP and RELA/p65. In terms of tissue distribution, widely expressed, with highest levels in liver, kidney, prostate and small intestine. Not detected in endothelial cells.

The protein localises to the endoplasmic reticulum membrane. It is found in the nucleus membrane. Its subcellular location is the cell junction. The protein resides in the tight junction. It localises to the nucleus. The protein localises to the nucleolus. It is found in the cytoplasm. Its subcellular location is the perinuclear region. Its function is as follows. Down-regulates SLC1A2/EAAT2 promoter activity when expressed ectopically. Activates the nuclear factor kappa-B (NF-kappa-B) transcription factor. Promotes anchorage-independent growth of immortalized melanocytes and astrocytes which is a key component in tumor cell expansion. Promotes lung metastasis and also has an effect on bone and brain metastasis, possibly by enhancing the seeding of tumor cells to the target organ endothelium. Induces chemoresistance. In Rattus norvegicus (Rat), this protein is Protein LYRIC (Mtdh).